A 242-amino-acid chain; its full sequence is ATP synthase subunit a, chloroplastic (242 aa).

5 helical membrane-spanning segments follow: residues 34–54 (GQVL…AVLG), 93–113 (VPFI…GAII), 132–152 (INTT…AGLS), 188–210 (LFGN…PLVI), and 222–242 (GSVQ…EALE).

It belongs to the ATPase A chain family. As to quaternary structure, F-type ATPases have 2 components, CF(1) - the catalytic core - and CF(0) - the membrane proton channel. CF(1) has five subunits: alpha(3), beta(3), gamma(1), delta(1), epsilon(1). CF(0) has four main subunits: a, b, b' and c.

It localises to the plastid. It is found in the chloroplast thylakoid membrane. Functionally, key component of the proton channel; it plays a direct role in the translocation of protons across the membrane. This Trieres chinensis (Marine centric diatom) protein is ATP synthase subunit a, chloroplastic.